The following is a 547-amino-acid chain: Chaperonin GroEL (547 aa).

ATP contacts are provided by residues 30–33 (TLGP), K51, 87–91 (DGTTT), G415, 479–481 (NAA), and D495.

This sequence belongs to the chaperonin (HSP60) family. Forms a cylinder of 14 subunits composed of two heptameric rings stacked back-to-back. Interacts with the co-chaperonin GroES.

The protein localises to the cytoplasm. The catalysed reaction is ATP + H2O + a folded polypeptide = ADP + phosphate + an unfolded polypeptide.. Functionally, together with its co-chaperonin GroES, plays an essential role in assisting protein folding. The GroEL-GroES system forms a nano-cage that allows encapsulation of the non-native substrate proteins and provides a physical environment optimized to promote and accelerate protein folding. The polypeptide is Chaperonin GroEL (Cupriavidus necator (strain ATCC 17699 / DSM 428 / KCTC 22496 / NCIMB 10442 / H16 / Stanier 337) (Ralstonia eutropha)).